Consider the following 95-residue polypeptide: Aspartyl/glutamyl-tRNA(Asn/Gln) amidotransferase subunit C (95 aa).

The protein belongs to the GatC family. As to quaternary structure, heterotrimer of A, B and C subunits.

It catalyses the reaction L-glutamyl-tRNA(Gln) + L-glutamine + ATP + H2O = L-glutaminyl-tRNA(Gln) + L-glutamate + ADP + phosphate + H(+). It carries out the reaction L-aspartyl-tRNA(Asn) + L-glutamine + ATP + H2O = L-asparaginyl-tRNA(Asn) + L-glutamate + ADP + phosphate + 2 H(+). Its function is as follows. Allows the formation of correctly charged Asn-tRNA(Asn) or Gln-tRNA(Gln) through the transamidation of misacylated Asp-tRNA(Asn) or Glu-tRNA(Gln) in organisms which lack either or both of asparaginyl-tRNA or glutaminyl-tRNA synthetases. The reaction takes place in the presence of glutamine and ATP through an activated phospho-Asp-tRNA(Asn) or phospho-Glu-tRNA(Gln). This Pseudomonas fluorescens (strain SBW25) protein is Aspartyl/glutamyl-tRNA(Asn/Gln) amidotransferase subunit C.